Consider the following 100-residue polypeptide: MVLTNFFLRKKTSTTASIAKKRLHIIVTERKIDNTPELNYLPKFKKDLLRIIHQYIHEPKKISIQLQEQDNNAYMLQLTISFLTKNQDLINSKKQDNTTV.

It belongs to the MinE family.

Its function is as follows. Prevents the cell division inhibition by proteins MinC and MinD at internal division sites while permitting inhibition at polar sites. This ensures cell division at the proper site by restricting the formation of a division septum at the midpoint of the long axis of the cell. The polypeptide is Cell division topological specificity factor (Blochmanniella floridana).